A 294-amino-acid chain; its full sequence is Flavin-dependent thymidylate synthase (294 aa).

One can recognise a ThyX domain in the interval 27–250 (GFIRVIDYMG…PFVYEAFEEY (224 aa)). FAD is bound by residues Thr73, 96–98 (RHR), and Glu104. Residues 93–96 (QWIR), 104–108 (EYSAR), and Arg189 each bind dUMP. Positions 96 to 106 (RHRTASVNEYS) match the ThyX motif motif. Residues 205–207 (NLH) and His211 contribute to the FAD site. DUMP is bound at residue Arg216. Arg216 acts as the Involved in ionization of N3 of dUMP, leading to its activation in catalysis.

It belongs to the thymidylate synthase ThyX family. In terms of assembly, homotetramer. Requires FAD as cofactor.

It carries out the reaction dUMP + (6R)-5,10-methylene-5,6,7,8-tetrahydrofolate + NADPH + H(+) = dTMP + (6S)-5,6,7,8-tetrahydrofolate + NADP(+). Its pathway is pyrimidine metabolism; dTTP biosynthesis. Catalyzes the reductive methylation of 2'-deoxyuridine-5'-monophosphate (dUMP) to 2'-deoxythymidine-5'-monophosphate (dTMP) while utilizing 5,10-methylenetetrahydrofolate (mTHF) as the methyl donor, and NADPH and FADH(2) as the reductant. This chain is Flavin-dependent thymidylate synthase, found in Rickettsia conorii (strain ATCC VR-613 / Malish 7).